A 412-amino-acid chain; its full sequence is MASSIPNAPSAFNSQSYVGLRAPLRTFNFSSPQAAKIPRSQRLFVVRASDSEFEAAVVAGKVPPAPPVRPRPAAPVGTPVVPSLPLHRRPRRNRKSPALRSAFQETSISPANFVYPLFIHEGEEDTPIGAMPGCYRLGWRHGLVEEVAKARDVGVNSVVLFPKIPDALKSPTGDEAYNENGLVPRTIRLLKDKYPDLVIYTDVALDPYSSDGHDGIVREDGVIMNDETVHQLCKQAVAQAQAGADVVSPSDMMDGRVGALRAALDAEGFQHVSIMSYTAKYASSFYGPFREALDSNPRFGDKKTYQMNPANYREALTEMREDESEGADILLVKPGLPYLDIIRLLRDNSPLPIAAYQVSGEYAMIKAAGALKMIDEEKVMMESLMCLRRAGADIILTYSALQAARCLCGEKR.

Residues 1–48 (MASSIPNAPSAFNSQSYVGLRAPLRTFNFSSPQAAKIPRSQRLFVVRA) constitute a chloroplast transit peptide. The tract at residues 68 to 101 (VRPRPAAPVGTPVVPSLPLHRRPRRNRKSPALRS) is disordered. Positions 86–97 (LHRRPRRNRKSP) are enriched in basic residues. The Schiff-base intermediate with substrate role is filled by Lys280. Residues Arg290 and Lys302 each coordinate 5-aminolevulinate. Residue Glu318 participates in Mg(2+) binding. The active-site Schiff-base intermediate with substrate is the Lys333. Positions 359 and 398 each coordinate 5-aminolevulinate.

It belongs to the ALAD family. As to quaternary structure, homooctamer. The cofactor is Mg(2+). In terms of tissue distribution, leaves and root nodules.

Its subcellular location is the plastid. The protein localises to the chloroplast. The enzyme catalyses 2 5-aminolevulinate = porphobilinogen + 2 H2O + H(+). Its pathway is porphyrin-containing compound metabolism; protoporphyrin-IX biosynthesis; coproporphyrinogen-III from 5-aminolevulinate: step 1/4. Its function is as follows. Is committed to plant tetrapyrrole synthesis. In terms of biological role, catalyzes an early step in the biosynthesis of tetrapyrroles. Binds two molecules of 5-aminolevulinate per subunit, each at a distinct site, and catalyzes their condensation to form porphobilinogen. This chain is Delta-aminolevulinic acid dehydratase, chloroplastic (HEMB), found in Glycine max (Soybean).